The following is a 565-amino-acid chain: Dihydroxy-acid dehydratase (565 aa).

Cys-53 serves as a coordination point for [2Fe-2S] cluster. Asp-85 contributes to the Mg(2+) binding site. Position 126 (Cys-126) interacts with [2Fe-2S] cluster. Mg(2+) contacts are provided by Asp-127 and Lys-128. Position 128 is an N6-carboxylysine (Lys-128). Residue Cys-198 participates in [2Fe-2S] cluster binding. Glu-450 lines the Mg(2+) pocket. The Proton acceptor role is filled by Ser-476.

The protein belongs to the IlvD/Edd family. In terms of assembly, homodimer. [2Fe-2S] cluster serves as cofactor. The cofactor is Mg(2+).

The catalysed reaction is (2R)-2,3-dihydroxy-3-methylbutanoate = 3-methyl-2-oxobutanoate + H2O. It carries out the reaction (2R,3R)-2,3-dihydroxy-3-methylpentanoate = (S)-3-methyl-2-oxopentanoate + H2O. It functions in the pathway amino-acid biosynthesis; L-isoleucine biosynthesis; L-isoleucine from 2-oxobutanoate: step 3/4. It participates in amino-acid biosynthesis; L-valine biosynthesis; L-valine from pyruvate: step 3/4. In terms of biological role, functions in the biosynthesis of branched-chain amino acids. Catalyzes the dehydration of (2R,3R)-2,3-dihydroxy-3-methylpentanoate (2,3-dihydroxy-3-methylvalerate) into 2-oxo-3-methylpentanoate (2-oxo-3-methylvalerate) and of (2R)-2,3-dihydroxy-3-methylbutanoate (2,3-dihydroxyisovalerate) into 2-oxo-3-methylbutanoate (2-oxoisovalerate), the penultimate precursor to L-isoleucine and L-valine, respectively. In Synechococcus sp. (strain JA-2-3B'a(2-13)) (Cyanobacteria bacterium Yellowstone B-Prime), this protein is Dihydroxy-acid dehydratase.